A 354-amino-acid polypeptide reads, in one-letter code: DNA polymerase IV (354 aa).

Residues 6–187 (IIHVDCDCFY…LPVARLHGVG (182 aa)) form the UmuC domain. The Mg(2+) site is built by Asp10 and Asp105. The active site involves Glu106.

It belongs to the DNA polymerase type-Y family. As to quaternary structure, monomer. Mg(2+) is required as a cofactor.

The protein localises to the cytoplasm. The enzyme catalyses DNA(n) + a 2'-deoxyribonucleoside 5'-triphosphate = DNA(n+1) + diphosphate. Functionally, poorly processive, error-prone DNA polymerase involved in untargeted mutagenesis. Copies undamaged DNA at stalled replication forks, which arise in vivo from mismatched or misaligned primer ends. These misaligned primers can be extended by PolIV. Exhibits no 3'-5' exonuclease (proofreading) activity. May be involved in translesional synthesis, in conjunction with the beta clamp from PolIII. This Pseudomonas putida (strain ATCC 700007 / DSM 6899 / JCM 31910 / BCRC 17059 / LMG 24140 / F1) protein is DNA polymerase IV.